Reading from the N-terminus, the 408-residue chain is Acetylornithine aminotransferase (408 aa).

Pyridoxal 5'-phosphate-binding positions include 107–108 (GT) and phenylalanine 141. Arginine 144 serves as a coordination point for N(2)-acetyl-L-ornithine. 227–230 (DEIQ) provides a ligand contact to pyridoxal 5'-phosphate. Position 256 is an N6-(pyridoxal phosphate)lysine (lysine 256). Residue threonine 284 participates in N(2)-acetyl-L-ornithine binding. Threonine 285 lines the pyridoxal 5'-phosphate pocket.

This sequence belongs to the class-III pyridoxal-phosphate-dependent aminotransferase family. ArgD subfamily. As to quaternary structure, homodimer. Pyridoxal 5'-phosphate is required as a cofactor.

It is found in the cytoplasm. It catalyses the reaction N(2)-acetyl-L-ornithine + 2-oxoglutarate = N-acetyl-L-glutamate 5-semialdehyde + L-glutamate. It functions in the pathway amino-acid biosynthesis; L-arginine biosynthesis; N(2)-acetyl-L-ornithine from L-glutamate: step 4/4. This Xanthomonas axonopodis pv. citri (strain 306) protein is Acetylornithine aminotransferase.